The following is a 416-amino-acid chain: Phosphoglycerate kinase (416 aa).

Residues 28–30 (DMN), Arg44, 65–68 (HQSR), Arg122, and Arg162 contribute to the substrate site. ATP-binding positions include Glu337 and 362-365 (GGHI).

Belongs to the phosphoglycerate kinase family. Monomer.

The protein resides in the cytoplasm. It carries out the reaction (2R)-3-phosphoglycerate + ATP = (2R)-3-phospho-glyceroyl phosphate + ADP. It participates in carbohydrate degradation; glycolysis; pyruvate from D-glyceraldehyde 3-phosphate: step 2/5. The chain is Phosphoglycerate kinase from Methanosarcina mazei (strain ATCC BAA-159 / DSM 3647 / Goe1 / Go1 / JCM 11833 / OCM 88) (Methanosarcina frisia).